We begin with the raw amino-acid sequence, 621 residues long: tRNA uridine 5-carboxymethylaminomethyl modification enzyme MnmG (621 aa).

Residue 8–13 participates in FAD binding; the sequence is GAGHAG. NAD(+) is bound at residue 269 to 283; the sequence is GPRYCPSVEDKIFRF.

It belongs to the MnmG family. As to quaternary structure, homodimer. Heterotetramer of two MnmE and two MnmG subunits. FAD serves as cofactor.

It is found in the cytoplasm. NAD-binding protein involved in the addition of a carboxymethylaminomethyl (cmnm) group at the wobble position (U34) of certain tRNAs, forming tRNA-cmnm(5)s(2)U34. The chain is tRNA uridine 5-carboxymethylaminomethyl modification enzyme MnmG from Chlorobium phaeobacteroides (strain DSM 266 / SMG 266 / 2430).